We begin with the raw amino-acid sequence, 238 residues long: GATA transcription factor 7 (238 aa).

The segment at 24–64 is disordered; that stretch reads TSLESSSSQRKEDEQEREKFKSFSDQSTRLSPPEDLLSFPG. Positions 32 to 45 are enriched in basic and acidic residues; that stretch reads QRKEDEQEREKFKS. The Nuclear localization signal motif lies at 112–119; sequence KPRSKRRR. Residues 160 to 214 form a GATA-type zinc finger; the sequence is QQLRRCCSHCGVQKTPQWRMGPLGAKTLCNACGVRFKSGRLLPEYRPACSPTFTN.

Belongs to the type IV zinc-finger family. Class A subfamily.

Its subcellular location is the nucleus. Transcriptional activator that specifically binds 5'-GATA-3' or 5'-GAT-3' motifs within gene promoters. May be involved in the regulation of some light-responsive genes. This is GATA transcription factor 7 (GATA7) from Arabidopsis thaliana (Mouse-ear cress).